The primary structure comprises 443 residues: Xaa-Pro dipeptidase (443 aa).

Residues Asp244, Asp255, His339, Glu384, and Glu423 each coordinate Mn(2+).

The protein belongs to the peptidase M24B family. Bacterial-type prolidase subfamily. The cofactor is Mn(2+).

It carries out the reaction Xaa-L-Pro dipeptide + H2O = an L-alpha-amino acid + L-proline. Functionally, splits dipeptides with a prolyl residue in the C-terminal position. This Pseudoalteromonas atlantica (strain T6c / ATCC BAA-1087) protein is Xaa-Pro dipeptidase.